Here is a 171-residue protein sequence, read N- to C-terminus: MGQILLILLLQLIYVPVLTLRTIMLVKGRTIIAGVLGTVETLIYIFALGIVFRDLTTVGMIVYALGFGLGILIGGFVERKLAIGYNMIQVHTQDFPAELIQVIRDNGFGVTHYQGQGRDGIRYRLDVLAARTRMKVLRNLVEEYEPKAFLVAFDSVDFKGGYMLKGLKRSQ.

The next 3 helical transmembrane spans lie at 4–24, 31–51, and 57–77; these read ILLILLLQLIYVPVLTLRTIM, IIAGVLGTVETLIYIFALGIV, and TVGMIVYALGFGLGILIGGFV.

The protein belongs to the UPF0316 family.

It is found in the cell membrane. The chain is UPF0316 protein Exig_2248 from Exiguobacterium sibiricum (strain DSM 17290 / CCUG 55495 / CIP 109462 / JCM 13490 / 255-15).